Here is a 270-residue protein sequence, read N- to C-terminus: Cell surface glycoprotein CD200 receptor 5 (270 aa).

The first 25 residues, 1 to 25 (MHALGRTPALTLLIFINIFVSGSRC), serve as a signal peptide directing secretion. At 26–241 (TDKNQTIQND…STTTTTSLLT (216 aa)) the chain is on the extracellular side. The region spanning 39-145 (PLTQVNTTVS…GNFGRVYDLQ (107 aa)) is the Ig-like V-type domain. Asn44 carries an N-linked (GlcNAc...) asparagine glycan. Intrachain disulfides connect Cys59/Cys129 and Cys164/Cys213. The region spanning 134 to 229 (PEGNFGRVYD…GNKSLFIELN (96 aa)) is the Ig-like C2-type domain. Residues Asn192 and Asn221 are each glycosylated (N-linked (GlcNAc...) asparagine). A helical membrane pass occupies residues 242 to 262 (ILYVKMVLLGIILLHVGFAFF). Residues 263-270 (QKRNVIRT) lie on the Cytoplasmic side of the membrane.

The protein belongs to the CD200R family.

Its subcellular location is the membrane. Its function is as follows. May not be a receptor for the CD200/OX2 cell surface glycoprotein. The sequence is that of Cell surface glycoprotein CD200 receptor 5 (Cd200r5) from Mus musculus (Mouse).